The chain runs to 48 residues: Sperm protamine R3 isoform 2 (48 aa).

Positions 1–29 are enriched in basic residues; it reads ARRRHSMKKKRKSVRRRKTRKNQRKRKNS. Residues 1-48 form a disordered region; that stretch reads ARRRHSMKKKRKSVRRRKTRKNQRKRKNSLGRSFKAHGFLKQPPRFRP.

In terms of tissue distribution, testis.

Its subcellular location is the nucleus. The protein resides in the chromosome. Functionally, protamines substitute for histones in the chromatin of sperm during the haploid phase of spermatogenesis. They compact sperm DNA into a highly condensed, stable and inactive complex. This is Sperm protamine R3 isoform 2 from Hydrolagus colliei (Spotted ratfish).